The chain runs to 449 residues: Na(+)-translocating NADH-quinone reductase subunit A (449 aa).

This sequence belongs to the NqrA family. Composed of six subunits; NqrA, NqrB, NqrC, NqrD, NqrE and NqrF.

It carries out the reaction a ubiquinone + n Na(+)(in) + NADH + H(+) = a ubiquinol + n Na(+)(out) + NAD(+). Its function is as follows. NQR complex catalyzes the reduction of ubiquinone-1 to ubiquinol by two successive reactions, coupled with the transport of Na(+) ions from the cytoplasm to the periplasm. NqrA to NqrE are probably involved in the second step, the conversion of ubisemiquinone to ubiquinol. The protein is Na(+)-translocating NADH-quinone reductase subunit A of Serratia proteamaculans (strain 568).